A 426-amino-acid polypeptide reads, in one-letter code: D-tagatose-1,6-bisphosphate aldolase subunit KbaZ (426 aa).

It belongs to the GatZ/KbaZ family. KbaZ subfamily. In terms of assembly, forms a complex with KbaY.

It functions in the pathway carbohydrate metabolism; D-tagatose 6-phosphate degradation; D-glyceraldehyde 3-phosphate and glycerone phosphate from D-tagatose 6-phosphate: step 2/2. Its function is as follows. Component of the tagatose-1,6-bisphosphate aldolase KbaYZ that is required for full activity and stability of the Y subunit. Could have a chaperone-like function for the proper and stable folding of KbaY. When expressed alone, KbaZ does not show any aldolase activity. The chain is D-tagatose-1,6-bisphosphate aldolase subunit KbaZ from Escherichia coli O157:H7.